The primary structure comprises 219 residues: Cysteine dioxygenase (219 aa).

Fe cation contacts are provided by His106, His108, and His166. Positions 113–183 form a cross-link, 3'-(S-cysteinyl)-tyrosine (Cys-Tyr); that stretch reads CVMKILHGSL…NDFAISLHLY (71 aa).

Belongs to the cysteine dioxygenase family. It depends on Fe cation as a cofactor. In terms of processing, the thioether cross-link between Cys-113 and Tyr-183 plays a structural role through stabilizing the Fe(2+) ion, and prevents the production of highly damaging free hydroxyl radicals by holding the oxygen radical via hydroxyl hydrogen.

It catalyses the reaction L-cysteine + O2 = 3-sulfino-L-alanine + H(+). Functionally, cysteine dioxygenase involved in sulfite formation from cysteine. Required for keratin degradation and plays an important role in filamentous growth and virulence. In Arthroderma benhamiae (Trichophyton mentagrophytes), this protein is Cysteine dioxygenase.